The sequence spans 461 residues: Polycomb group protein FIE1 (461 aa).

Basic residues predominate over residues 1–11; that stretch reads MPPSKARRKRS. The segment at 1-56 is disordered; the sequence is MPPSKARRKRSLRDITATVATGTVANSKPGSSSTNEGKQQDKKKEGPQEPDIPPLP. Residues 18–37 show a composition bias toward polar residues; it reads TVATGTVANSKPGSSSTNEG. The span at 38–47 shows a compositional bias: basic and acidic residues; the sequence is KQQDKKKEGP. WD repeat units follow at residues 143 to 186, 189 to 229, 235 to 275, 301 to 338, 351 to 391, and 398 to 437; these read DKDE…LDKS, GHGG…CILV, GHRH…IYVE, VHSD…RRPG, PKCS…PVLI, and ECKS…ASSS. The disordered stretch occupies residues 429 to 461; the sequence is EVDPAASSSKPDQAAAPAAGVGAGAGADADADA. Positions 432-448 are enriched in low complexity; sequence PAASSSKPDQAAAPAAG.

It belongs to the WD repeat ESC family. Specifically expressed in kernel starting from 6 days after pollination.

The protein localises to the nucleus. In terms of biological role, polycomb group (PcG) protein. PcG proteins act by forming multiprotein complexes, which are required to maintain the transcriptionally repressive state of homeotic genes throughout development. PcG proteins are not required to initiate repression, but to maintain it during later stages of development. They probably act via the methylation of histones, rendering chromatin heritably changed in its expressibility. The sequence is that of Polycomb group protein FIE1 (FIE1) from Zea mays (Maize).